Here is a 180-residue protein sequence, read N- to C-terminus: Virion protein US10 homolog (180 aa).

This sequence belongs to the herpesviridae US10 family. In terms of processing, phosphorylated.

The protein resides in the virion tegument. Its subcellular location is the host nucleus matrix. This chain is Virion protein US10 homolog (64), found in Varicella-zoster virus (strain Dumas) (HHV-3).